The following is an 80-amino-acid chain: uncharacterized protein (80 aa).

This is an uncharacterized protein from Escherichia coli (Bacteriophage T4).